A 327-amino-acid chain; its full sequence is GMP reductase (327 aa).

Residue Cys175 is the Thioimidate intermediate of the active site. Residue 204-227 (IIADGGIRTNGDVAKSIRFGATMV) participates in NADP(+) binding.

The protein belongs to the IMPDH/GMPR family. GuaC type 2 subfamily.

It catalyses the reaction IMP + NH4(+) + NADP(+) = GMP + NADPH + 2 H(+). In terms of biological role, catalyzes the irreversible NADPH-dependent deamination of GMP to IMP. It functions in the conversion of nucleobase, nucleoside and nucleotide derivatives of G to A nucleotides, and in maintaining the intracellular balance of A and G nucleotides. This is GMP reductase from Bacillus cereus (strain ZK / E33L).